The chain runs to 450 residues: UDP-N-acetylmuramoylalanine--D-glutamate ligase (450 aa).

Residue 119-125 participates in ATP binding; it reads GSNGKTT.

This sequence belongs to the MurCDEF family.

The protein localises to the cytoplasm. The catalysed reaction is UDP-N-acetyl-alpha-D-muramoyl-L-alanine + D-glutamate + ATP = UDP-N-acetyl-alpha-D-muramoyl-L-alanyl-D-glutamate + ADP + phosphate + H(+). It participates in cell wall biogenesis; peptidoglycan biosynthesis. Its function is as follows. Cell wall formation. Catalyzes the addition of glutamate to the nucleotide precursor UDP-N-acetylmuramoyl-L-alanine (UMA). The protein is UDP-N-acetylmuramoylalanine--D-glutamate ligase of Streptococcus thermophilus (strain CNRZ 1066).